Reading from the N-terminus, the 258-residue chain is UPF0246 protein LHK_02295 (258 aa).

This sequence belongs to the UPF0246 family.

This is UPF0246 protein LHK_02295 from Laribacter hongkongensis (strain HLHK9).